The chain runs to 530 residues: MFSLQNLCRKTLPDCKLPEFFDEYILQLLGLYWENHGTIQRAGNNCVLIQQHNLIPVNEALRIAASEENYEIVSLLLAWEGNLYYAIIGALEGNRPDLIRKYDDQIKDHHEILPFIDDPIIFHKCHIMRRCFFNCILYQAVKYSKFRVLLYFKHRLGDDLPLTHLLIEKACEDHNYEVIKWIYENLHSYNIMDTFECAIAHKDLRLYCLGYTFIYNRIVPYKYHHLDICILSSLQLLHKVAAKGYLDFILETLKYDHNINNIDIILTQAATYNHRKILTYFIPQLTYAQIEQCLLVAIKTKASKKTLNLLLSHLNLSIKLIKKISQYVVTYNSTNIISILSMRRKKKIYLDIILTEFVKNAIFNKFVVRCMDTFSINPERIVKMAARINRMMLVKNISERVWKNHAVKLKHLKHAVHTMKHQEGKNRLMNFIYDHCYYHMQGEEIFGLARFYAIHHAPKLFDVFYDCCMLDATRFKSLLLDCPHIIGKNAYDAGINLVNKYIGNLFAMGVLSKKEILQDYPSIYSKHDMF.

This sequence belongs to the asfivirus MGF 505 family.

Functionally, plays a role in virus cell tropism, and may be required for efficient virus replication in macrophages. This African swine fever virus (isolate Tick/Malawi/Lil 20-1/1983) (ASFV) protein is Protein MGF 505-1R.